Here is a 1304-residue protein sequence, read N- to C-terminus: DNA-directed RNA polymerase subunit beta' (1304 aa).

4 residues coordinate Zn(2+): Cys60, Cys62, Cys75, and Cys78. Mg(2+) is bound by residues Asp541, Asp543, and Asp545. 4 residues coordinate Zn(2+): Cys887, Cys963, Cys970, and Cys973.

The protein belongs to the RNA polymerase beta' chain family. As to quaternary structure, the RNAP catalytic core consists of 2 alpha, 1 beta, 1 beta' and 1 omega subunit. When a sigma factor is associated with the core the holoenzyme is formed, which can initiate transcription. It depends on Mg(2+) as a cofactor. Zn(2+) is required as a cofactor.

The catalysed reaction is RNA(n) + a ribonucleoside 5'-triphosphate = RNA(n+1) + diphosphate. Its function is as follows. DNA-dependent RNA polymerase catalyzes the transcription of DNA into RNA using the four ribonucleoside triphosphates as substrates. The protein is DNA-directed RNA polymerase subunit beta' of Acidothermus cellulolyticus (strain ATCC 43068 / DSM 8971 / 11B).